Reading from the N-terminus, the 251-residue chain is ATP synthase subunit a (251 aa).

The next 5 membrane-spanning stretches (helical) occupy residues 34–54 (VFLTSWFVIGVLVLASVAASS), 93–113 (FVGTLFLFIFVSNWSGALVPF), 130–150 (INTTVALALLTSLAYFYAGFS), 195–215 (LVVGVLVLLVPLFVPLPVMAL), and 216–236 (GLFTSAIQALIFATLAAAYIG).

This sequence belongs to the ATPase A chain family. In terms of assembly, F-type ATPases have 2 components, CF(1) - the catalytic core - and CF(0) - the membrane proton channel. CF(1) has five subunits: alpha(3), beta(3), gamma(1), delta(1), epsilon(1). CF(0) has four main subunits: a, b, b' and c.

Its subcellular location is the cellular thylakoid membrane. Functionally, key component of the proton channel; it plays a direct role in the translocation of protons across the membrane. This chain is ATP synthase subunit a, found in Trichormus variabilis (strain ATCC 29413 / PCC 7937) (Anabaena variabilis).